Here is a 556-residue protein sequence, read N- to C-terminus: Formate--tetrahydrofolate ligase (556 aa).

65 to 72 (TAAGEGKS) lines the ATP pocket.

Belongs to the formate--tetrahydrofolate ligase family.

The enzyme catalyses (6S)-5,6,7,8-tetrahydrofolate + formate + ATP = (6R)-10-formyltetrahydrofolate + ADP + phosphate. Its pathway is one-carbon metabolism; tetrahydrofolate interconversion. In Elusimicrobium minutum (strain Pei191), this protein is Formate--tetrahydrofolate ligase.